Consider the following 300-residue polypeptide: Manganese-binding lipoprotein MntA (300 aa).

The signal sequence occupies residues M1–G19. C20 is lipidated: N-palmitoyl cysteine. Residue C20 is the site of S-diacylglycerol cysteine attachment. The Mn(2+) site is built by H68, H130, E196, and D271.

This sequence belongs to the bacterial solute-binding protein 9 family.

It is found in the cell membrane. Its function is as follows. Probably part of ATP-binding cassette (ABC) transport system MntABCD involved in manganese import. Binds manganese and delivers it to the membrane permease for translocation into the cytoplasm. In Halalkalibacterium halodurans (strain ATCC BAA-125 / DSM 18197 / FERM 7344 / JCM 9153 / C-125) (Bacillus halodurans), this protein is Manganese-binding lipoprotein MntA (mntA).